A 132-amino-acid chain; its full sequence is Large ribosomal subunit protein bL19 (132 aa).

It belongs to the bacterial ribosomal protein bL19 family.

In terms of biological role, this protein is located at the 30S-50S ribosomal subunit interface and may play a role in the structure and function of the aminoacyl-tRNA binding site. In Methylobacterium radiotolerans (strain ATCC 27329 / DSM 1819 / JCM 2831 / NBRC 15690 / NCIMB 10815 / 0-1), this protein is Large ribosomal subunit protein bL19.